An 818-amino-acid polypeptide reads, in one-letter code: Sodium/hydrogen exchanger 1 (818 aa).

The Extracellular segment spans residues 1 to 98 (MLLWPGASGL…FPVLGIDYQH (98 aa)). The interval 44-76 (STIRGSEPPRERSIGDVTTAPPELAPESRPVNH) is disordered. Residue Asn-75 is glycosylated (N-linked (GlcNAc...) asparagine). Residues 99–121 (VRIPFEIALWILLACLMKIGFHV) form a helical membrane-spanning segment. Residues 122 to 130 (IPTISSIVP) are Cytoplasmic-facing. Residues 131–148 (ESCLLIVVGLLVGGLIKG) traverse the membrane as a helical segment. Residues 149–158 (VGETPPILQS) lie on the Extracellular side of the membrane. Residues 159 to 176 (EVFFLFLLPPIILDAGYF) form a helical membrane-spanning segment. At 177 to 186 (LPLRQFTENL) the chain is on the cytoplasmic side. The helical transmembrane segment at 187-215 (GTILIFAVVGTLWNAFFLGGLMYAVCLVG) threads the bilayer. Residues 216–222 (GEQINNI) are Extracellular-facing. A helical transmembrane segment spans residues 223–249 (GLLENLLFGSIISAVDPVAVLAVFEEI). The Cytoplasmic portion of the chain corresponds to 250–252 (HIN). The helical transmembrane segment at 253 to 283 (ELLHILVFGESLLNDAVTVVLYHLFEEFANY) threads the bilayer. The Extracellular portion of the chain corresponds to 284–287 (DRVG). The chain crosses the membrane as a helical span at residues 288–322 (IVDIILGFLSFFVVSLGGVFVGVVYGVIAAFTSRF). The Cytoplasmic portion of the chain corresponds to 323-328 (TSHIRV). The chain crosses the membrane as a helical span at residues 329-341 (IEPLFVFLYSYMA). The Extracellular segment spans residues 342-350 (YLSAELFHL). A helical membrane pass occupies residues 351–371 (SGIMALIASGVVMRPYVEANI). Residues 372–373 (SH) lie on the Cytoplasmic side of the membrane. The helical transmembrane segment at 374–404 (KSHTTIKYFLKMWSSVSETLIFIFLGVSTVA) threads the bilayer. Over 405–410 (GSHHWN) the chain is Extracellular. A helical transmembrane segment spans residues 411–438 (WTFVISTLLFCLIARVLGVLGLTWFINK). The Cytoplasmic portion of the chain corresponds to 439–444 (FRIVKL). The helical transmembrane segment at 445–469 (TPKDQFIIAYGGLRGAIAFSLGYLL) threads the bilayer. At 470 to 475 (DKKHFP) the chain is on the extracellular side. The chain crosses the membrane as a helical span at residues 476–505 (MCDLFLTAIITVIFFTVFVQGMTIRPLVDL). The tract at residues 503 to 545 (VDLLAVKKKQETKRSINEEIHTQFLDHLLTGIEDICGHYGHHH) is interaction with TESC. Topologically, residues 506-818 (LAVKKKQETK…EGEPFIPKGQ (313 aa)) are cytoplasmic. The segment at 509-516 (KKKQETKR) is PI(4,5)P2-binding region. The tract at residues 515–545 (KRSINEEIHTQFLDHLLTGIEDICGHYGHHH) is interaction with CHP2. A confers pH-dependent PI(4,5)P2 binding region spans residues 540–545 (HYGHHH). The interval 552–560 (RFNKKYVKK) is PI(4,5)P2-binding region. 2 positions are modified to phosphoserine: Ser-599 and Ser-602. Thr-603 carries the phosphothreonine modification. Ser-605 and Ser-648 each carry phosphoserine. The interval 633–818 (KILRNNLQKT…EGEPFIPKGQ (186 aa)) is interaction with TESC. Residues 633 to 818 (KILRNNLQKT…EGEPFIPKGQ (186 aa)) are interaction with CALM1. The tract at residues 684-687 (LTVP) is interaction with PPP3CA. Ser-693, Ser-697, and Ser-703 each carry phosphoserine. The segment at 715-720 (PVITID) is interaction with PPP3CA. Phosphoserine occurs at positions 723, 726, and 729. Positions 741-818 (VLGLSRDPGR…EGEPFIPKGQ (78 aa)) are disordered. Thr-782 carries the phosphothreonine modification. The span at 785-794 (PSDSPSSQRI) shows a compositional bias: polar residues. 3 positions are modified to phosphoserine: Ser-788, Ser-790, and Ser-799.

This sequence belongs to the monovalent cation:proton antiporter 1 (CPA1) transporter (TC 2.A.36) family. Homodimer; dimerization is crucial for its function. Oligomer. Interacts with CALM in a calcium-dependent manner. Interacts with TESC. Interacts (via the juxtamembrane region of the cytoplasmic C-terminal domain) with CHP1; the interaction occurs at the plasma membrane in a calcium-dependent manner. Interacts with CHP2; the interaction occurs in a calcium-dependent manner. Interacts with EZR; regulates the cytoskeletal interactions of SLC9A1 and promotes stress fiber formation. Post-translationally, ubiquitinated, leading to its degradation by the proteasome. Ubiquitination is reduced by CHP1. In terms of processing, O-glycosylated. Palmitoylated; may play a major role in SLC9A1 regulation. Post-translationally, phosphorylation at Thr-782 increases SLC9A1 activity. Specifically dephosphorylated at Thr-782 by PPP3CA that negatively regulates SLC9A1 activity. Phosphorylation at Ser-648 by AKT1 reduces SLC9A1 binding to CALM1.

It is found in the cell membrane. The protein resides in the basolateral cell membrane. It catalyses the reaction Na(+)(in) + H(+)(out) = Na(+)(out) + H(+)(in). It carries out the reaction Li(+)(out) + H(+)(in) = Li(+)(in) + H(+)(out). The catalysed reaction is Li(+)(in) + Na(+)(out) = Li(+)(out) + Na(+)(in). Its activity is regulated as follows. Activated at acidic pHs. Inhibited by amiloride and 5-amino-substituted derivatives. Inhibited by cariporide and eniporide. Phosphatidylinositol 4,5-bisphosphate (PI(4,5)P2) and phosphatidylinositol 3,4,5-trisphosphate (PI(3,4,5)P3) bind and differentially regulate SLC9A1 activity. Functionally, electroneutral Na(+) /H(+) antiporter that extrudes Na(+) in exchange for external protons driven by the inward sodium ion chemical gradient, protecting cells from acidification that occurs from metabolism. Exchanges intracellular H(+) ions for extracellular Na(+) in 1:1 stoichiometry. Plays a key role in maintening intracellular pH neutral and cell volume, and thus is important for cell growth, proliferation, migration and survival. In addition, can transport lithium Li(+) and also functions as a Na(+)/Li(+) antiporter. SLC9A1 also functions in membrane anchoring and organization of scaffolding complexes that coordinate signaling inputs. The protein is Sodium/hydrogen exchanger 1 (SLC9A1) of Bos taurus (Bovine).